The following is a 456-amino-acid chain: Bifunctional protein GlmU (456 aa).

The interval 1–229 (MLNSAMSVVI…ISETDGVNNR (229 aa)) is pyrophosphorylase. UDP-N-acetyl-alpha-D-glucosamine-binding positions include 11–14 (LAAG), Lys25, Gln76, 81–82 (GT), 103–105 (YGD), Gly140, Glu154, Asn169, and Asn227. Residue Asp105 coordinates Mg(2+). Asn227 is a binding site for Mg(2+). The tract at residues 230 to 250 (LQLSRLERIYQAEQAEKLLLS) is linker. The interval 251–456 (GVMLRDPARF…QGWQRPVKKK (206 aa)) is N-acetyltransferase. Residues Arg333 and Lys351 each coordinate UDP-N-acetyl-alpha-D-glucosamine. Catalysis depends on His363, which acts as the Proton acceptor. Tyr366 and Asn377 together coordinate UDP-N-acetyl-alpha-D-glucosamine. Acetyl-CoA-binding positions include Ala380, 386–387 (NY), Ser405, Ala423, and Arg440.

It in the N-terminal section; belongs to the N-acetylglucosamine-1-phosphate uridyltransferase family. This sequence in the C-terminal section; belongs to the transferase hexapeptide repeat family. Homotrimer. Mg(2+) serves as cofactor.

Its subcellular location is the cytoplasm. The catalysed reaction is alpha-D-glucosamine 1-phosphate + acetyl-CoA = N-acetyl-alpha-D-glucosamine 1-phosphate + CoA + H(+). It catalyses the reaction N-acetyl-alpha-D-glucosamine 1-phosphate + UTP + H(+) = UDP-N-acetyl-alpha-D-glucosamine + diphosphate. It functions in the pathway nucleotide-sugar biosynthesis; UDP-N-acetyl-alpha-D-glucosamine biosynthesis; N-acetyl-alpha-D-glucosamine 1-phosphate from alpha-D-glucosamine 6-phosphate (route II): step 2/2. The protein operates within nucleotide-sugar biosynthesis; UDP-N-acetyl-alpha-D-glucosamine biosynthesis; UDP-N-acetyl-alpha-D-glucosamine from N-acetyl-alpha-D-glucosamine 1-phosphate: step 1/1. Its pathway is bacterial outer membrane biogenesis; LPS lipid A biosynthesis. Catalyzes the last two sequential reactions in the de novo biosynthetic pathway for UDP-N-acetylglucosamine (UDP-GlcNAc). The C-terminal domain catalyzes the transfer of acetyl group from acetyl coenzyme A to glucosamine-1-phosphate (GlcN-1-P) to produce N-acetylglucosamine-1-phosphate (GlcNAc-1-P), which is converted into UDP-GlcNAc by the transfer of uridine 5-monophosphate (from uridine 5-triphosphate), a reaction catalyzed by the N-terminal domain. This chain is Bifunctional protein GlmU, found in Salmonella dublin (strain CT_02021853).